A 297-amino-acid polypeptide reads, in one-letter code: 4-hydroxy-tetrahydrodipicolinate synthase (297 aa).

Residue Thr-55 coordinates pyruvate. The active-site Proton donor/acceptor is the Tyr-144. Lys-172 functions as the Schiff-base intermediate with substrate in the catalytic mechanism. Ile-213 contributes to the pyruvate binding site.

This sequence belongs to the DapA family. In terms of assembly, homotetramer; dimer of dimers.

The protein resides in the cytoplasm. The catalysed reaction is L-aspartate 4-semialdehyde + pyruvate = (2S,4S)-4-hydroxy-2,3,4,5-tetrahydrodipicolinate + H2O + H(+). The protein operates within amino-acid biosynthesis; L-lysine biosynthesis via DAP pathway; (S)-tetrahydrodipicolinate from L-aspartate: step 3/4. In terms of biological role, catalyzes the condensation of (S)-aspartate-beta-semialdehyde [(S)-ASA] and pyruvate to 4-hydroxy-tetrahydrodipicolinate (HTPA). The protein is 4-hydroxy-tetrahydrodipicolinate synthase of Lactococcus lactis subsp. cremoris (strain SK11).